A 119-amino-acid chain; its full sequence is MEIWINPACSKCRSAVQLLDAEGADYTVRRYLEDVPSEDEIRQVLDRLGLEPWDITRTQEAEAKELGVKEWARDASARDQWIKALAEHPKLIQRPIITADDGTAVVGRTDEAVRDALSR.

Cys-9 and Cys-12 form a disulfide bridge.

It belongs to the ArsC family.

This is an uncharacterized protein from Streptomyces viridochromogenes.